We begin with the raw amino-acid sequence, 946 residues long: Atos homolog protein A (946 aa).

The tract at residues 24-32 is transactivation domain 1 (TAD1); sequence ALLITEGRT. The span at 34 to 43 shows a compositional bias: basic and acidic residues; that stretch reads EHSVKGRTEG. 4 disordered regions span residues 34–58, 246–271, 484–524, and 547–567; these read EHSVKGRTEGPHCPPAQLSQPAPNK, SVTQPHNSQDNDQNSAPVSQHAFTKP, FQSS…TGNQ, and SCTDSFHKPQKDNPKICSQKV. Composition is skewed to polar residues over residues 247-267 and 484-500; these read VTQPHNSQDNDQNSAPVSQHA and FQSSGQSTVPSSNNENI. Basic and acidic residues-rich tracts occupy residues 503–517 and 547–560; these read LPEKRDIKQSEHGEI and SCTDSFHKPQKDNP. A required for macropage invasion region spans residues 749–806; that stretch reads LLGNFEESVLNYRFEPLGVVEGFTAEVGASGIFCPTHMTLPVKVSFYSVSDDNAPSPY. A transactivation domain 2 (TAD2) region spans residues 833–841; it reads FNPNKTVVK.

The protein belongs to the ATOS family.

It is found in the nucleus. Transcription regulator that syncronizes transcriptional and translational programs to promote macrophage invasion of tissues. This Xenopus tropicalis (Western clawed frog) protein is Atos homolog protein A (atosa).